Consider the following 706-residue polypeptide: Choline transporter-like protein 2 (706 aa).

Residues 1-33 (MGDERPHYYGKHGTPQKYDPTFKGPIYNRGCTD) lie on the Cytoplasmic side of the membrane. Residue threonine 14 is modified to Phosphothreonine. The helical transmembrane segment at 34-54 (IICCVFLLLAIVGYVAVGIIA) threads the bilayer. Residues 55-232 (WTHGDPRKVI…RIFEDYTVSW (178 aa)) are Extracellular-facing. Asparagine 187 and asparagine 200 each carry an N-linked (GlcNAc...) asparagine glycan. The helical transmembrane segment at 233 to 253 (YWIIIGLVIAMAMSLLFIILL) threads the bilayer. At 254 to 256 (RFL) the chain is on the cytoplasmic side. The helical transmembrane segment at 257-277 (AGIMVWVMIIMVILVLGYGIF) threads the bilayer. Residues 278–315 (HCYMEYSRLRGEAGSDVSLVDLGFQTDFRVYLHLRQTW) are Extracellular-facing. Residues 316 to 336 (LAFMIILSILEVIIILLLIFL) form a helical membrane-spanning segment. At 337–364 (RKRILIAIALIKEASRAVGYVMCSLLYP) the chain is on the cytoplasmic side. A helical membrane pass occupies residues 365 to 385 (LVTFFLLCLCIAYWASTAVFL). At 386–457 (STSNEAVYKI…FNAFMFFWLA (72 aa)) the chain is on the extracellular side. Asparagine 417 carries N-linked (GlcNAc...) asparagine glycosylation. A helical transmembrane segment spans residues 458-480 (NFVLALGQVTLAGAFASYYWALR). Topologically, residues 481–504 (KPDDLPAFPLFSAFGRALRYHTGS) are cytoplasmic. Residues 505–525 (LAFGALILAIVQIIRVILEYL) form a helical membrane-spanning segment. Residues 526-563 (DQRLKAAENKFAKCLMTCLKCCFWCLEKFIKFLNRNAY) are Extracellular-facing. Residues 564–584 (IMIAIYGTNFCTSARNAFFLL) form a helical membrane-spanning segment. Topologically, residues 585–599 (MRNIIRVAVLDKVTD) are cytoplasmic. A helical membrane pass occupies residues 600-620 (FLFLLGKLLIVGSVGILAFFF). Over 621–638 (FTHRIRIVQDTAPPLNYY) the chain is Extracellular. The chain crosses the membrane as a helical span at residues 639–659 (WVPILTVIVGSYLIAHGFFSV). Over 660–706 (YGMCVDTLFLCFLEDLERNDGSAERPYFMSSTLKKLLNKTNKKAAES) the chain is Cytoplasmic.

Belongs to the CTL (choline transporter-like) family. As to quaternary structure, interacts with COCH. In terms of tissue distribution, present in supporting cells of the inner ear (at protein level). Expressed in inner ear vestibular tissue.

It localises to the cell membrane. Its subcellular location is the mitochondrion outer membrane. The enzyme catalyses choline(out) + n H(+)(in) = choline(in) + n H(+)(out). It catalyses the reaction ethanolamine(out) + n H(+)(in) = ethanolamine(in) + n H(+)(out). Choline/H+ antiporter, mainly in mitochodria. Also acts as a low-affinity ethanolamine/H+ antiporter, regulating the supply of extracellular ethanolamine (Etn) for the CDP-Etn pathway, redistribute intracellular Etn and balance the CDP-Cho and CDP-Etn arms of the Kennedy pathway. Its function is as follows. Does not exhibit choline transporter activity. This chain is Choline transporter-like protein 2, found in Homo sapiens (Human).